The chain runs to 35 residues: Photosystem II reaction center protein T (35 aa).

A helical membrane pass occupies residues 3-23 (ALVYTFLLVSTLGIIFFAIFF).

The protein belongs to the PsbT family. As to quaternary structure, PSII is composed of 1 copy each of membrane proteins PsbA, PsbB, PsbC, PsbD, PsbE, PsbF, PsbH, PsbI, PsbJ, PsbK, PsbL, PsbM, PsbT, PsbY, PsbZ, Psb30/Ycf12, at least 3 peripheral proteins of the oxygen-evolving complex and a large number of cofactors. It forms dimeric complexes.

The protein localises to the plastid. It is found in the chloroplast thylakoid membrane. Found at the monomer-monomer interface of the photosystem II (PS II) dimer, plays a role in assembly and dimerization of PSII. PSII is a light-driven water plastoquinone oxidoreductase, using light energy to abstract electrons from H(2)O, generating a proton gradient subsequently used for ATP formation. This Saururus cernuus (Lizard's tail) protein is Photosystem II reaction center protein T.